Consider the following 158-residue polypeptide: Phosphopantetheine adenylyltransferase (158 aa).

S10 lines the substrate pocket. ATP is bound by residues 10–11 (SF) and H18. The substrate site is built by K42, L74, and R88. Residues 89–91 (GLR), E99, and 124–130 (YANISSS) each bind ATP.

It belongs to the bacterial CoaD family. In terms of assembly, homohexamer. Mg(2+) serves as cofactor.

Its subcellular location is the cytoplasm. It catalyses the reaction (R)-4'-phosphopantetheine + ATP + H(+) = 3'-dephospho-CoA + diphosphate. The protein operates within cofactor biosynthesis; coenzyme A biosynthesis; CoA from (R)-pantothenate: step 4/5. Functionally, reversibly transfers an adenylyl group from ATP to 4'-phosphopantetheine, yielding dephospho-CoA (dPCoA) and pyrophosphate. This Vesicomyosocius okutanii subsp. Calyptogena okutanii (strain HA) protein is Phosphopantetheine adenylyltransferase.